A 190-amino-acid polypeptide reads, in one-letter code: Imidazoleglycerol-phosphate dehydratase (190 aa).

This sequence belongs to the imidazoleglycerol-phosphate dehydratase family.

The protein resides in the cytoplasm. The catalysed reaction is D-erythro-1-(imidazol-4-yl)glycerol 3-phosphate = 3-(imidazol-4-yl)-2-oxopropyl phosphate + H2O. It participates in amino-acid biosynthesis; L-histidine biosynthesis; L-histidine from 5-phospho-alpha-D-ribose 1-diphosphate: step 6/9. This is Imidazoleglycerol-phosphate dehydratase from Methanococcus maripaludis (strain C5 / ATCC BAA-1333).